We begin with the raw amino-acid sequence, 399 residues long: MNIHEHQAKAVLAEFGAPVPRGFAAFTPDEAAAAAEKLGGPVFVVKSQIHAGGRGKGKFEGLGPDAKGGVRVVKSVEEVRSNAEEMLGRVLVTHQTGPKGKQVNRLYIEEGAAIAKEFYLSLLVDRASSKVSVVASTEGGMDIEDVAHSTPEKIHTFTIDPATGVWPTHHRALAKALGLTGGLAKEAASLLNQLYTAFMAKDMAMLEINPLIVTADDHLRVLDAKLSFDGNSLFRHPDIKALRDESEEDPKEIEASKYDLAYIALDGEIGCMVNGAGLAMATMDIIKLYGAEPANFLDVGGGASKEKVTAAFKIITADPAVKGILVNIFGGIMRCDIIAEGVIAAVKEVGLQVPLVVRLEGTNVELGKKIISESGLNVIAANDLSDGAEKIVAAVKGAR.

The 246-residue stretch at 9 to 254 (KAVLAEFGAP…ESEEDPKEIE (246 aa)) folds into the ATP-grasp domain. ATP is bound by residues Lys46, 53 to 55 (GRG), Glu109, Ala112, and Glu117. Mg(2+) is bound by residues Asn209 and Asp223. Residues Asn274 and 331-333 (GIM) contribute to the substrate site.

It belongs to the succinate/malate CoA ligase beta subunit family. Heterotetramer of two alpha and two beta subunits. Mg(2+) is required as a cofactor.

It carries out the reaction succinate + ATP + CoA = succinyl-CoA + ADP + phosphate. The enzyme catalyses GTP + succinate + CoA = succinyl-CoA + GDP + phosphate. The protein operates within carbohydrate metabolism; tricarboxylic acid cycle; succinate from succinyl-CoA (ligase route): step 1/1. In terms of biological role, succinyl-CoA synthetase functions in the citric acid cycle (TCA), coupling the hydrolysis of succinyl-CoA to the synthesis of either ATP or GTP and thus represents the only step of substrate-level phosphorylation in the TCA. The beta subunit provides nucleotide specificity of the enzyme and binds the substrate succinate, while the binding sites for coenzyme A and phosphate are found in the alpha subunit. The protein is Succinate--CoA ligase [ADP-forming] subunit beta of Caulobacter vibrioides (strain NA1000 / CB15N) (Caulobacter crescentus).